We begin with the raw amino-acid sequence, 533 residues long: 2-succinyl-5-enolpyruvyl-6-hydroxy-3-cyclohexene-1-carboxylate synthase (533 aa).

The protein belongs to the TPP enzyme family. MenD subfamily. As to quaternary structure, homodimer. Mg(2+) is required as a cofactor. Requires Mn(2+) as cofactor. It depends on thiamine diphosphate as a cofactor.

It catalyses the reaction isochorismate + 2-oxoglutarate + H(+) = 5-enolpyruvoyl-6-hydroxy-2-succinyl-cyclohex-3-ene-1-carboxylate + CO2. It participates in quinol/quinone metabolism; 1,4-dihydroxy-2-naphthoate biosynthesis; 1,4-dihydroxy-2-naphthoate from chorismate: step 2/7. The protein operates within quinol/quinone metabolism; menaquinone biosynthesis. In terms of biological role, catalyzes the thiamine diphosphate-dependent decarboxylation of 2-oxoglutarate and the subsequent addition of the resulting succinic semialdehyde-thiamine pyrophosphate anion to isochorismate to yield 2-succinyl-5-enolpyruvyl-6-hydroxy-3-cyclohexene-1-carboxylate (SEPHCHC). This is 2-succinyl-5-enolpyruvyl-6-hydroxy-3-cyclohexene-1-carboxylate synthase from Akkermansia muciniphila (strain ATCC BAA-835 / DSM 22959 / JCM 33894 / BCRC 81048 / CCUG 64013 / CIP 107961 / Muc).